The chain runs to 263 residues: 4-hydroxy-tetrahydrodipicolinate reductase (263 aa).

NAD(+) is bound by residues 8–13 (GACGRM), Asp-34, 99–101 (GTT), and 125–128 (SPNY). The Proton donor/acceptor role is filled by His-157. His-158 provides a ligand contact to (S)-2,3,4,5-tetrahydrodipicolinate. Lys-161 acts as the Proton donor in catalysis. Position 167–168 (167–168 (GT)) interacts with (S)-2,3,4,5-tetrahydrodipicolinate.

Belongs to the DapB family.

The protein localises to the cytoplasm. It catalyses the reaction (S)-2,3,4,5-tetrahydrodipicolinate + NAD(+) + H2O = (2S,4S)-4-hydroxy-2,3,4,5-tetrahydrodipicolinate + NADH + H(+). The catalysed reaction is (S)-2,3,4,5-tetrahydrodipicolinate + NADP(+) + H2O = (2S,4S)-4-hydroxy-2,3,4,5-tetrahydrodipicolinate + NADPH + H(+). Its pathway is amino-acid biosynthesis; L-lysine biosynthesis via DAP pathway; (S)-tetrahydrodipicolinate from L-aspartate: step 4/4. Catalyzes the conversion of 4-hydroxy-tetrahydrodipicolinate (HTPA) to tetrahydrodipicolinate. The sequence is that of 4-hydroxy-tetrahydrodipicolinate reductase from Methanosarcina mazei (strain ATCC BAA-159 / DSM 3647 / Goe1 / Go1 / JCM 11833 / OCM 88) (Methanosarcina frisia).